The primary structure comprises 251 residues: Leucine-rich repeat and calponin homology domain-containing protein 1 (251 aa).

Residues Ser73–Thr97 are disordered. Residues Ser87 and Ser91 each carry the phosphoserine modification. The span at Pro88–Thr97 shows a compositional bias: polar residues. Thr123 bears the Phosphothreonine mark. The 114-residue stretch at Met131 to Thr244 folds into the Calponin-homology (CH) domain.

As to quaternary structure, interacts (via LRR repeats) with unphosphorylated DOCK8 (via DHR-2 domain); the interaction prevents the interaction between DOCK8 and CDC42.

It localises to the cytoplasm. Its function is as follows. Acts as a negative regulator of GTPase CDC42 by sequestering CDC42-guanine exchange factor DOCK8. Probably by preventing CDC42 activation, negatively regulates CD4(+) T-cell migration. This is Leucine-rich repeat and calponin homology domain-containing protein 1 from Felis catus (Cat).